Here is a 230-residue protein sequence, read N- to C-terminus: Ion-translocating oxidoreductase complex subunit E (230 aa).

The next 6 membrane-spanning stretches (helical) occupy residues 18–38 (ALVQ…ATNA), 39–59 (LGLG…VSAL), 63–83 (TPAE…VSAV), 86–106 (LINA…PLIV), 125–145 (WLSA…MFVL), and 182–202 (PFLL…MLAV).

This sequence belongs to the NqrDE/RnfAE family. The complex is composed of six subunits: RsxA, RsxB, RsxC, RsxD, RsxE and RsxG.

It is found in the cell inner membrane. Part of a membrane-bound complex that couples electron transfer with translocation of ions across the membrane. Required to maintain the reduced state of SoxR. The polypeptide is Ion-translocating oxidoreductase complex subunit E (Salmonella dublin (strain CT_02021853)).